Consider the following 610-residue polypeptide: Phosphomethylpyrimidine synthase (610 aa).

Substrate contacts are provided by residues asparagine 216, methionine 245, tyrosine 274, histidine 310, 330–332 (SRG), 371–374 (DGLR), and glutamate 410. Histidine 414 provides a ligand contact to Zn(2+). Residue tyrosine 437 participates in substrate binding. Histidine 478 contacts Zn(2+). [4Fe-4S] cluster is bound by residues cysteine 558, cysteine 561, and cysteine 566.

This sequence belongs to the ThiC family. Homodimer. It depends on [4Fe-4S] cluster as a cofactor.

The catalysed reaction is 5-amino-1-(5-phospho-beta-D-ribosyl)imidazole + S-adenosyl-L-methionine = 4-amino-2-methyl-5-(phosphooxymethyl)pyrimidine + CO + 5'-deoxyadenosine + formate + L-methionine + 3 H(+). It functions in the pathway cofactor biosynthesis; thiamine diphosphate biosynthesis. In terms of biological role, catalyzes the synthesis of the hydroxymethylpyrimidine phosphate (HMP-P) moiety of thiamine from aminoimidazole ribotide (AIR) in a radical S-adenosyl-L-methionine (SAM)-dependent reaction. The protein is Phosphomethylpyrimidine synthase of Rhizobium etli (strain ATCC 51251 / DSM 11541 / JCM 21823 / NBRC 15573 / CFN 42).